The chain runs to 526 residues: Nitrogenase iron-iron protein alpha chain (526 aa).

Residues Cys49, Cys75, and Cys138 each coordinate [8Fe-7S] cluster. Positions 257 and 423 each coordinate [8Fe-9S-C-homocitryl] cluster. The segment at 507–526 is disordered; the sequence is RNQPMPPSRKLRDAVQPAAE.

Belongs to the NifD/NifK/NifE/NifN family. In terms of assembly, hexamer of two alpha, two beta, and two delta chains. Requires [8Fe-7S] cluster as cofactor. [8Fe-9S-C-homocitryl] cluster is required as a cofactor.

It carries out the reaction N2 + 8 reduced [2Fe-2S]-[ferredoxin] + 16 ATP + 16 H2O = H2 + 8 oxidized [2Fe-2S]-[ferredoxin] + 2 NH4(+) + 16 ADP + 16 phosphate + 6 H(+). Functionally, this iron-iron protein is part of the nitrogenase complex that catalyzes the key enzymatic reactions in nitrogen fixation. Other nitrogenase complexes utilize a molybdenum-iron protein or a vanadium-iron protein. The chain is Nitrogenase iron-iron protein alpha chain (anfD) from Rhodobacter capsulatus (Rhodopseudomonas capsulata).